The chain runs to 280 residues: Ribosomal RNA small subunit methyltransferase A (280 aa).

Positions 15, 17, 42, 64, 89, and 109 each coordinate S-adenosyl-L-methionine.

This sequence belongs to the class I-like SAM-binding methyltransferase superfamily. rRNA adenine N(6)-methyltransferase family. RsmA subfamily.

The protein localises to the cytoplasm. It carries out the reaction adenosine(1518)/adenosine(1519) in 16S rRNA + 4 S-adenosyl-L-methionine = N(6)-dimethyladenosine(1518)/N(6)-dimethyladenosine(1519) in 16S rRNA + 4 S-adenosyl-L-homocysteine + 4 H(+). Functionally, specifically dimethylates two adjacent adenosines (A1518 and A1519) in the loop of a conserved hairpin near the 3'-end of 16S rRNA in the 30S particle. May play a critical role in biogenesis of 30S subunits. This chain is Ribosomal RNA small subunit methyltransferase A, found in Prochlorococcus marinus (strain MIT 9313).